The primary structure comprises 254 residues: 4-hydroxy-tetrahydrodipicolinate reductase (254 aa).

7 to 12 serves as a coordination point for NAD(+); that stretch reads GASGRI. Arginine 35 lines the NADP(+) pocket. NAD(+)-binding positions include 91–93 and 115–118; these read GTT and AHNM. The Proton donor/acceptor role is filled by histidine 147. A (S)-2,3,4,5-tetrahydrodipicolinate-binding site is contributed by histidine 148. Residue lysine 151 is the Proton donor of the active site. 157–158 contributes to the (S)-2,3,4,5-tetrahydrodipicolinate binding site; the sequence is GT.

It belongs to the DapB family.

It localises to the cytoplasm. The enzyme catalyses (S)-2,3,4,5-tetrahydrodipicolinate + NAD(+) + H2O = (2S,4S)-4-hydroxy-2,3,4,5-tetrahydrodipicolinate + NADH + H(+). It catalyses the reaction (S)-2,3,4,5-tetrahydrodipicolinate + NADP(+) + H2O = (2S,4S)-4-hydroxy-2,3,4,5-tetrahydrodipicolinate + NADPH + H(+). It participates in amino-acid biosynthesis; L-lysine biosynthesis via DAP pathway; (S)-tetrahydrodipicolinate from L-aspartate: step 4/4. Catalyzes the conversion of 4-hydroxy-tetrahydrodipicolinate (HTPA) to tetrahydrodipicolinate. The sequence is that of 4-hydroxy-tetrahydrodipicolinate reductase from Helicobacter pylori (strain HPAG1).